The chain runs to 424 residues: L-glutamine:2-deoxy-scyllo-inosose aminotransferase (424 aa).

An N6-(pyridoxal phosphate)lysine modification is found at lysine 202.

This sequence belongs to the DegT/DnrJ/EryC1 family. L-glutamine:2-deoxy-scyllo-inosose/scyllo-inosose aminotransferase subfamily. It depends on pyridoxal 5'-phosphate as a cofactor.

The catalysed reaction is 2-deoxy-L-scyllo-inosose + L-glutamine = 2-deoxy-scyllo-inosamine + 2-oxoglutaramate. It catalyses the reaction 3-amino-2,3-dideoxy-scyllo-inosose + L-glutamine = 2-deoxystreptamine + 2-oxoglutaramate. The protein operates within metabolic intermediate biosynthesis; 2-deoxystreptamine biosynthesis; 2-deoxystreptamine from D-glucose 6-phosphate: step 2/4. It participates in antibiotic biosynthesis; lividomycin biosynthesis. Functionally, catalyzes the PLP-dependent transamination of 2-deoxy-scyllo-inosose (2-DOI) to form 2-deoxy-scyllo-inosamine (2-DOIA) using L-glutamine as the amino donor. Also catalyzes the transamination of 3-amino-2,3-dideoxy-scyllo-inosose (keto-2-DOIA) into 2-deoxystreptamine (2-DOS). The polypeptide is L-glutamine:2-deoxy-scyllo-inosose aminotransferase (livS) (Streptomyces lividus).